The sequence spans 293 residues: Acetyl-coenzyme A carboxylase carboxyl transferase subunit beta (293 aa).

The CoA carboxyltransferase N-terminal domain maps to 29-293; the sequence is LWSKCPECGQ…GCKPMELTSA (265 aa). Zn(2+)-binding residues include Cys-33, Cys-36, Cys-52, and Cys-55. The C4-type zinc-finger motif lies at 33 to 55; the sequence is CPECGQVVYLKDLKLNASVCANC.

Belongs to the AccD/PCCB family. Acetyl-CoA carboxylase is a heterohexamer composed of biotin carboxyl carrier protein (AccB), biotin carboxylase (AccC) and two subunits each of ACCase subunit alpha (AccA) and ACCase subunit beta (AccD). It depends on Zn(2+) as a cofactor.

Its subcellular location is the cytoplasm. It catalyses the reaction N(6)-carboxybiotinyl-L-lysyl-[protein] + acetyl-CoA = N(6)-biotinyl-L-lysyl-[protein] + malonyl-CoA. It functions in the pathway lipid metabolism; malonyl-CoA biosynthesis; malonyl-CoA from acetyl-CoA: step 1/1. In terms of biological role, component of the acetyl coenzyme A carboxylase (ACC) complex. Biotin carboxylase (BC) catalyzes the carboxylation of biotin on its carrier protein (BCCP) and then the CO(2) group is transferred by the transcarboxylase to acetyl-CoA to form malonyl-CoA. In Synechococcus sp. (strain CC9605), this protein is Acetyl-coenzyme A carboxylase carboxyl transferase subunit beta.